A 370-amino-acid chain; its full sequence is Putative agmatine deiminase (370 aa).

Cys361 functions as the Amidino-cysteine intermediate in the catalytic mechanism.

It belongs to the agmatine deiminase family.

The catalysed reaction is agmatine + H2O = N-carbamoylputrescine + NH4(+). This is Putative agmatine deiminase from Shewanella baltica (strain OS223).